The sequence spans 456 residues: Cytochrome c biogenesis protein CcsB (456 aa).

3 helical membrane passes run 29-49 (LRLA…GTVI), 88-108 (AGWF…CTFR), and 174-194 (VGPI…IWGS).

This sequence belongs to the Ccs1/CcsB family. As to quaternary structure, may interact with CcsA.

It localises to the cellular thylakoid membrane. Required during biogenesis of c-type cytochromes (cytochrome c6 and cytochrome f) at the step of heme attachment. This is Cytochrome c biogenesis protein CcsB from Synechococcus sp. (strain ATCC 27144 / PCC 6301 / SAUG 1402/1) (Anacystis nidulans).